A 556-amino-acid chain; its full sequence is Formate--tetrahydrofolate ligase (556 aa).

Position 65–72 (65–72) interacts with ATP; the sequence is TPAGEGKS.

It belongs to the formate--tetrahydrofolate ligase family.

It carries out the reaction (6S)-5,6,7,8-tetrahydrofolate + formate + ATP = (6R)-10-formyltetrahydrofolate + ADP + phosphate. It functions in the pathway one-carbon metabolism; tetrahydrofolate interconversion. This Clostridium acetobutylicum (strain ATCC 824 / DSM 792 / JCM 1419 / IAM 19013 / LMG 5710 / NBRC 13948 / NRRL B-527 / VKM B-1787 / 2291 / W) protein is Formate--tetrahydrofolate ligase.